The sequence spans 400 residues: Acetate kinase (400 aa).

Position 9 (N9) interacts with Mg(2+). ATP is bound at residue K16. Substrate is bound at residue R90. D147 acts as the Proton donor/acceptor in catalysis. ATP contacts are provided by residues 207-211, 282-284, and 330-334; these read HIGNG, DLR, and GIGEN. Position 385 (E385) interacts with Mg(2+).

The protein belongs to the acetokinase family. In terms of assembly, homodimer. Mg(2+) is required as a cofactor. Mn(2+) serves as cofactor.

The protein resides in the cytoplasm. It catalyses the reaction acetate + ATP = acetyl phosphate + ADP. It participates in metabolic intermediate biosynthesis; acetyl-CoA biosynthesis; acetyl-CoA from acetate: step 1/2. In terms of biological role, catalyzes the formation of acetyl phosphate from acetate and ATP. Can also catalyze the reverse reaction. This is Acetate kinase from Staphylococcus aureus (strain JH1).